A 519-amino-acid chain; its full sequence is Acetylcholine receptor subunit gamma (519 aa).

The N-terminal stretch at 1-22 is a signal peptide; the sequence is MHGGQGPQLLLLLLATCLGAQS. Residues 23–240 lie on the Extracellular side of the membrane; that stretch reads RNQEERLLAD…VVFYLLIQRK (218 aa). N-linked (GlcNAc...) asparagine glycosylation is found at N52 and N163. The cysteines at positions 150 and 164 are disulfide-linked. 3 helical membrane passes run 241-265, 274-292, and 308-329; these read PLFYVINIIVPCVLISSVAILIYFL, CTVATNVLLAQTVFLFLVA, and YLTFLMVVTILIVVNSVVVLNV. Residues 330–476 lie on the Cytoplasmic side of the membrane; it reads SLRSPHTHSM…WLLVGRVLDR (147 aa). A helical transmembrane segment spans residues 477–497; it reads VCFLAMLSLFICGTAGIFLMA.

The protein belongs to the ligand-gated ion channel (TC 1.A.9) family. Acetylcholine receptor (TC 1.A.9.1) subfamily. Gamma/CHRNG sub-subfamily. In terms of assembly, pentamer of two alpha chains, and one each of the beta, delta, and gamma (in immature muscle) or epsilon (in mature muscle) chains.

The protein resides in the postsynaptic cell membrane. It is found in the cell membrane. The catalysed reaction is K(+)(in) = K(+)(out). The enzyme catalyses Na(+)(in) = Na(+)(out). After binding acetylcholine, the AChR responds by an extensive change in conformation that affects all subunits and leads to opening of an ion-conducting channel across the plasma membrane. The polypeptide is Acetylcholine receptor subunit gamma (Chrng) (Rattus norvegicus (Rat)).